Reading from the N-terminus, the 229-residue chain is MQPEFKKKSIRSFVIRGGRMTEGQKNAFDKWWPHYGVSLFDGPINPAELFGRSAPLVLEIGFGMGDSLVDMAIADPDSDFIGIEVHPPGVGRLINRAGTEGVPNLRCYMADANDVLSDCIPDGSLDRLQLFFPDPWHKKKHNKRRIVQPEFVEKIRAKLKIGGHFHMATDWEAYAEHMMEVMTAAPGYENIAGGSEFAPQPSYRPTTKFERRGENLGHGVWDIIFSRSL.

The S-adenosyl-L-methionine site is built by Glu59, Glu84, Asp111, and Asp134. The active site involves Asp134. Lys138 lines the substrate pocket. Residues 140 to 145 (KHNKRR) form an interaction with RNA region. Substrate-binding positions include Asp170 and 207–210 (TKFE).

This sequence belongs to the class I-like SAM-binding methyltransferase superfamily. TrmB family.

The enzyme catalyses guanosine(46) in tRNA + S-adenosyl-L-methionine = N(7)-methylguanosine(46) in tRNA + S-adenosyl-L-homocysteine. It participates in tRNA modification; N(7)-methylguanine-tRNA biosynthesis. Its function is as follows. Catalyzes the formation of N(7)-methylguanine at position 46 (m7G46) in tRNA. This Saccharophagus degradans (strain 2-40 / ATCC 43961 / DSM 17024) protein is tRNA (guanine-N(7)-)-methyltransferase.